Consider the following 91-residue polypeptide: Small ribosomal subunit protein uS19 (91 aa).

Belongs to the universal ribosomal protein uS19 family.

Its function is as follows. Protein S19 forms a complex with S13 that binds strongly to the 16S ribosomal RNA. The polypeptide is Small ribosomal subunit protein uS19 (Burkholderia cenocepacia (strain HI2424)).